A 202-amino-acid chain; its full sequence is Large ribosomal subunit protein uL4 (202 aa).

Residues 45 to 71 (HAQKNRSEVSGSGKKPWRQKGTGRARV) form a disordered region.

Belongs to the universal ribosomal protein uL4 family. As to quaternary structure, part of the 50S ribosomal subunit.

Its function is as follows. One of the primary rRNA binding proteins, this protein initially binds near the 5'-end of the 23S rRNA. It is important during the early stages of 50S assembly. It makes multiple contacts with different domains of the 23S rRNA in the assembled 50S subunit and ribosome. Functionally, forms part of the polypeptide exit tunnel. This is Large ribosomal subunit protein uL4 from Buchnera aphidicola subsp. Baizongia pistaciae (strain Bp).